We begin with the raw amino-acid sequence, 461 residues long: Bifunctional protein GlmU (461 aa).

The pyrophosphorylase stretch occupies residues 1-232 (MNLQIIILAA…SFEVQGINNR (232 aa)). Residues 8–11 (LAAG), Lys-22, Gln-73, and 78–79 (GT) contribute to the UDP-N-acetyl-alpha-D-glucosamine site. Asp-102 provides a ligand contact to Mg(2+). UDP-N-acetyl-alpha-D-glucosamine contacts are provided by Gly-142, Glu-157, and Asn-230. Residue Asn-230 coordinates Mg(2+). A linker region spans residues 233–253 (QQLQQLERTWQQRAANQLMEK). The segment at 254-461 (GATLADANRF…WKRPVKRERD (208 aa)) is N-acetyltransferase. Arg-336 and Lys-354 together coordinate UDP-N-acetyl-alpha-D-glucosamine. The active-site Proton acceptor is His-366. UDP-N-acetyl-alpha-D-glucosamine is bound by residues Tyr-369 and Asn-380. Acetyl-CoA-binding positions include Ala-383, 389-390 (NY), Ser-408, and Ala-426.

In the N-terminal section; belongs to the N-acetylglucosamine-1-phosphate uridyltransferase family. This sequence in the C-terminal section; belongs to the transferase hexapeptide repeat family. Homotrimer. Mg(2+) is required as a cofactor.

The protein localises to the cytoplasm. It carries out the reaction alpha-D-glucosamine 1-phosphate + acetyl-CoA = N-acetyl-alpha-D-glucosamine 1-phosphate + CoA + H(+). The enzyme catalyses N-acetyl-alpha-D-glucosamine 1-phosphate + UTP + H(+) = UDP-N-acetyl-alpha-D-glucosamine + diphosphate. Its pathway is nucleotide-sugar biosynthesis; UDP-N-acetyl-alpha-D-glucosamine biosynthesis; N-acetyl-alpha-D-glucosamine 1-phosphate from alpha-D-glucosamine 6-phosphate (route II): step 2/2. The protein operates within nucleotide-sugar biosynthesis; UDP-N-acetyl-alpha-D-glucosamine biosynthesis; UDP-N-acetyl-alpha-D-glucosamine from N-acetyl-alpha-D-glucosamine 1-phosphate: step 1/1. It functions in the pathway bacterial outer membrane biogenesis; LPS lipid A biosynthesis. In terms of biological role, catalyzes the last two sequential reactions in the de novo biosynthetic pathway for UDP-N-acetylglucosamine (UDP-GlcNAc). The C-terminal domain catalyzes the transfer of acetyl group from acetyl coenzyme A to glucosamine-1-phosphate (GlcN-1-P) to produce N-acetylglucosamine-1-phosphate (GlcNAc-1-P), which is converted into UDP-GlcNAc by the transfer of uridine 5-monophosphate (from uridine 5-triphosphate), a reaction catalyzed by the N-terminal domain. This Legionella pneumophila (strain Paris) protein is Bifunctional protein GlmU.